Here is a 780-residue protein sequence, read N- to C-terminus: RNA-binding protein Pasilla (780 aa).

Disordered stretches follow at residues Leu31 to Glu50, Gln76 to Ile113, and Gln150 to Ser190. Composition is skewed to low complexity over residues His79–Ser91, Ser99–Ile113, and Pro176–Ser190. KH domains are found at residues Thr273 to Ile340, Asp366 to Ile432, and Lys691 to Ile758. A disordered region spans residues Ala674–Ser693. Residues Gly686–Thr776 form a required for RNA binding region.

Expressed in the central nervous system in mushroom body neurons (at protein level).

It localises to the nucleus. The protein resides in the cytoplasm. Functions to regulate alternative splicing in neurons by binding pre-mRNA in a sequence-specific manner to activate exon inclusion. Plays a role in long-term memory formation by processing the unspliced Orb2-isoform A (Orb2A) mRNA and thereby controlling Orb2A protein abundance. The polypeptide is RNA-binding protein Pasilla (Drosophila melanogaster (Fruit fly)).